Consider the following 467-residue polypeptide: 2-succinylbenzoate--CoA ligase (467 aa).

This sequence belongs to the ATP-dependent AMP-binding enzyme family. MenE subfamily.

It catalyses the reaction 2-succinylbenzoate + ATP + CoA = 2-succinylbenzoyl-CoA + AMP + diphosphate. It participates in quinol/quinone metabolism; 1,4-dihydroxy-2-naphthoate biosynthesis; 1,4-dihydroxy-2-naphthoate from chorismate: step 5/7. The protein operates within quinol/quinone metabolism; menaquinone biosynthesis. Functionally, converts 2-succinylbenzoate (OSB) to 2-succinylbenzoyl-CoA (OSB-CoA). The protein is 2-succinylbenzoate--CoA ligase of Listeria monocytogenes serovar 1/2a (strain ATCC BAA-679 / EGD-e).